Consider the following 429-residue polypeptide: Cyclin-B2-2 (429 aa).

The interval 66–98 (SQRKQESCDKKKLDSLHPSISRSQEETKKLKPS) is disordered. The span at 68 to 80 (RKQESCDKKKLDS) shows a compositional bias: basic and acidic residues.

Belongs to the cyclin family. Cyclin AB subfamily. In terms of assembly, interacts with CDC20-1 and CDC20-2. As to expression, expressed in roots.

The polypeptide is Cyclin-B2-2 (CYCB2-2) (Arabidopsis thaliana (Mouse-ear cress)).